The primary structure comprises 91 residues: Elongation factor 1-beta (91 aa).

This sequence belongs to the EF-1-beta/EF-1-delta family.

In terms of biological role, promotes the exchange of GDP for GTP in EF-1-alpha/GDP, thus allowing the regeneration of EF-1-alpha/GTP that could then be used to form the ternary complex EF-1-alpha/GTP/AAtRNA. This chain is Elongation factor 1-beta, found in Pyrococcus furiosus (strain ATCC 43587 / DSM 3638 / JCM 8422 / Vc1).